We begin with the raw amino-acid sequence, 151 residues long: Small ribosomal subunit protein uS13 (151 aa).

This sequence belongs to the universal ribosomal protein uS13 family. As to quaternary structure, part of the 30S ribosomal subunit. Forms a loose heterodimer with protein S19. Forms two bridges to the 50S subunit in the 70S ribosome.

In terms of biological role, located at the top of the head of the 30S subunit, it contacts several helices of the 16S rRNA. In the 70S ribosome it contacts the 23S rRNA (bridge B1a) and protein L5 of the 50S subunit (bridge B1b), connecting the 2 subunits; these bridges are implicated in subunit movement. The polypeptide is Small ribosomal subunit protein uS13 (Staphylothermus marinus (strain ATCC 43588 / DSM 3639 / JCM 9404 / F1)).